Here is a 59-residue protein sequence, read N- to C-terminus: MAVPQRKVTHSRKAKRGSHLHLSIPTLVACKRCGKKITPHRVCNSCGYYKNKKVPQIEA.

It belongs to the bacterial ribosomal protein bL32 family.

This Malacoplasma penetrans (strain HF-2) (Mycoplasma penetrans) protein is Large ribosomal subunit protein bL32.